We begin with the raw amino-acid sequence, 499 residues long: MEKQYVLAIDQGTTSSRAMLFDRQGKVAGVAQREFGQIFPQPGWVEHNPREIMTSVYTTITELLNNAQIDARAIAGIGITNQRETAVVWDKATGQPIYNAIVWQSRQTKDICTQLKEAGHEQMVREKTGLLIDAYFSGTKVKWILDHVEGARERAQKGELAFGTIDSWLIWNLTGGKVHVTDYTNASRTMMFNIHTLEWDAELLAMLDVPAQMLPDVRSSSEIYGMTQTQYFYGEQVPIAGIAGDQQAALFGQACFEPGMAKNTYGTGCFMLMNTGDKAVASKAGLLTTIAWGIDGKVEYALEGAIFVAGSVVQWLRDGLRMLGKASDSQAYAERAGDNDGVYIVPAFVGLGAPYWRSDIRGAVFGLTRGTTKEHFVRAAVESMAYQTRDVLTAMQSDSGIELKELRADGGAIANDFMAQFQSDILNVPVLRPEVAETTALGAAYLAGLATGFWGSREEIAKQWAVDRRFEPAMADDKRQGLYAGWQQAVEATMGFRIS.

Thr-13 contacts ADP. ATP is bound by residues Thr-13, Thr-14, and Ser-15. Thr-13 lines the sn-glycerol 3-phosphate pocket. Arg-17 provides a ligand contact to ADP. Residues Arg-83, Glu-84, Tyr-135, and Asp-245 each coordinate sn-glycerol 3-phosphate. Positions 83, 84, 135, 245, and 246 each coordinate glycerol. Positions 267 and 310 each coordinate ADP. ATP contacts are provided by Thr-267, Gly-310, Gln-314, and Gly-411. Residues Gly-411 and Asn-415 each coordinate ADP.

It belongs to the FGGY kinase family.

It carries out the reaction glycerol + ATP = sn-glycerol 3-phosphate + ADP + H(+). The protein operates within polyol metabolism; glycerol degradation via glycerol kinase pathway; sn-glycerol 3-phosphate from glycerol: step 1/1. With respect to regulation, inhibited by fructose 1,6-bisphosphate (FBP). In terms of biological role, key enzyme in the regulation of glycerol uptake and metabolism. Catalyzes the phosphorylation of glycerol to yield sn-glycerol 3-phosphate. The chain is Glycerol kinase from Xanthomonas euvesicatoria pv. vesicatoria (strain 85-10) (Xanthomonas campestris pv. vesicatoria).